Consider the following 294-residue polypeptide: uncharacterized protein (294 aa).

2 disordered regions span residues 25–59 (VQVYRPVGQGAKRRINSEESDVSEDGNSKPKRVRR) and 77–141 (LKDD…FEAP). Over residues 86–139 (YEELEDDDDDESIEEESDSEFEGESSSDEEESSYDSDSDYDSETEPEDSDDDFE) the composition is skewed to acidic residues. The stretch at 201 to 234 (IKFYKRNTTFTEEELAEIEEDLLAEVKARYNNMK) forms a coiled coil. Basic and acidic residues predominate over residues 242–259 (TIETTEDDKKAGEVNKYD). A disordered region spans residues 242 to 294 (TIETTEDDKKAGEVNKYDIDDDFIEKTESDEEEEITEDDSSEQETVVVEPVDE). Positions 260–283 (IDDDFIEKTESDEEEEITEDDSSE) are enriched in acidic residues.

This is an uncharacterized protein from Magallana gigas (Pacific oyster).